Consider the following 321-residue polypeptide: Outer envelope protein 36, chloroplastic (321 aa).

It belongs to the OEP80 (TC 1.B.33.2) family. In terms of tissue distribution, expressed in germinating seeds.

It is found in the plastid. Its subcellular location is the chloroplast outer membrane. Its function is as follows. May play a role during plastid development. This chain is Outer envelope protein 36, chloroplastic, found in Arabidopsis thaliana (Mouse-ear cress).